A 638-amino-acid chain; its full sequence is Protein disulfide-isomerase A4 (638 aa).

The first 20 residues, 1–20 (MKLRKAWLLVLLLALTQLLA), serve as a signal peptide directing secretion. Thioredoxin domains are found at residues 21-162 (AASA…EVSQ) and 162-294 (QPDW…EFLK). Residues 24–50 (AGDAHEDTSDTENATEEEEEEDDDDLE) are disordered. Residues 32–50 (SDTENATEEEEEEDDDDLE) are compositionally biased toward acidic residues. N-linked (GlcNAc...) asparagine glycosylation occurs at Asn-36. Positions 84-87 (CGHC) match the CXXC motif. Disulfide bonds link Cys-84–Cys-87 and Cys-199–Cys-202. An N6-acetyllysine modification is found at Lys-359. Residues 498–629 (FKKGKLKPVI…LSKFIDEHAT (132 aa)) enclose the Thioredoxin 3 domain. The short motif at 548-551 (CGHC) is the CXXC element. A disulfide bridge connects residues Cys-548 and Cys-551. The Prevents secretion from ER motif lies at 635–638 (KEEL).

This sequence belongs to the protein disulfide isomerase family. As to quaternary structure, part of a large chaperone multiprotein complex comprising DNAJB11, HSP90B1, HSPA5, HYOU, PDIA2, PDIA4, PDIA6, PPIB, SDF2L1, UGGT1 and very small amounts of ERP29, but not, or at very low levels, CALR nor CANX. Component of a complex containing at least CRELD2, MANF, MATN3 and PDIA4.

It is found in the endoplasmic reticulum lumen. Its subcellular location is the melanosome. It catalyses the reaction Catalyzes the rearrangement of -S-S- bonds in proteins.. The polypeptide is Protein disulfide-isomerase A4 (Pdia4) (Mus musculus (Mouse)).